Reading from the N-terminus, the 173-residue chain is Shikimate kinase 1 (173 aa).

Position 14–19 (14–19) interacts with ATP; that stretch reads GAGKST. S18 contributes to the Mg(2+) binding site. 3 residues coordinate substrate: D36, R60, and G82. Residue R120 participates in ATP binding. Substrate is bound at residue R140.

The protein belongs to the shikimate kinase family. In terms of assembly, monomer. Mg(2+) serves as cofactor.

It localises to the cytoplasm. The catalysed reaction is shikimate + ATP = 3-phosphoshikimate + ADP + H(+). It participates in metabolic intermediate biosynthesis; chorismate biosynthesis; chorismate from D-erythrose 4-phosphate and phosphoenolpyruvate: step 5/7. Catalyzes the specific phosphorylation of the 3-hydroxyl group of shikimic acid using ATP as a cosubstrate. In Hamiltonella defensa subsp. Acyrthosiphon pisum (strain 5AT), this protein is Shikimate kinase 1.